The following is an 84-amino-acid chain: Keratin-associated protein 19-4 (84 aa).

This sequence belongs to the KRTAP type 19 family. In terms of assembly, interacts with hair keratins.

In terms of biological role, in the hair cortex, hair keratin intermediate filaments are embedded in an interfilamentous matrix, consisting of hair keratin-associated proteins (KRTAP), which are essential for the formation of a rigid and resistant hair shaft through their extensive disulfide bond cross-linking with abundant cysteine residues of hair keratins. The matrix proteins include the high-sulfur and high-glycine-tyrosine keratins. This Homo sapiens (Human) protein is Keratin-associated protein 19-4 (KRTAP19-4).